The sequence spans 768 residues: DNA replication licensing factor MCM3 homolog 1 (768 aa).

The region spanning 290–497 is the MCM domain; it reads TFDLLGNSLA…IDRQISEHVA (208 aa). 340-347 lines the ATP pocket; the sequence is GDPSVAKS. The Arginine finger motif lies at 472 to 475; it reads SRFD. The disordered stretch occupies residues 662 to 687; that stretch reads MKQQAEHDAGATGGTVDGHGSSGNDP. Residues 672-682 show a composition bias toward gly residues; that stretch reads ATGGTVDGHGS.

This sequence belongs to the MCM family.

It localises to the nucleus. It carries out the reaction ATP + H2O = ADP + phosphate + H(+). Its function is as follows. Acts as a factor that allows the DNA to undergo a single round of replication per cell cycle. Required for DNA replication and cell proliferation. May act as a component of the MCM complex which is the putative replicative helicase of the replication licensing system in eukaryotic cells. In Zea mays (Maize), this protein is DNA replication licensing factor MCM3 homolog 1 (ROA1).